A 410-amino-acid chain; its full sequence is Elongation factor Tu, chloroplastic (410 aa).

The tr-type G domain maps to 10-214 (KPHVNIGTIG…NVDEYIPTPE (205 aa)). The interval 19–26 (GHVDHGKT) is G1. 19 to 26 (GHVDHGKT) is a GTP binding site. Threonine 26 serves as a coordination point for Mg(2+). The G2 stretch occupies residues 60 to 64 (GITIN). Residues 81–84 (DCPG) form a G3 region. GTP-binding positions include 81 to 85 (DCPGH) and 136 to 139 (NKED). The segment at 136–139 (NKED) is G4. Residues 174 to 176 (SAL) form a G5 region.

It belongs to the TRAFAC class translation factor GTPase superfamily. Classic translation factor GTPase family. EF-Tu/EF-1A subfamily.

The protein resides in the plastid. It localises to the chloroplast stroma. It carries out the reaction GTP + H2O = GDP + phosphate + H(+). Functionally, GTP hydrolase that promotes the GTP-dependent binding of aminoacyl-tRNA to the A-site of ribosomes during protein biosynthesis. The protein is Elongation factor Tu, chloroplastic (tufA) of Bigelowiella natans (Pedinomonas minutissima).